The sequence spans 76 residues: Omega-conotoxin-like TxO5 (76 aa).

A signal peptide spans 1 to 22 (MKLTCMMIVAVLFLTAWTFVTA). Residues 23-48 (ITSNGLENLFPKAHHEMKNPEASKLN) constitute a propeptide that is removed on maturation. Intrachain disulfides connect Cys51–Cys66, Cys58–Cys70, and Cys65–Cys75.

This sequence belongs to the conotoxin O1 superfamily. Expressed by the venom duct.

It localises to the secreted. Its function is as follows. Omega-conotoxins act at presynaptic membranes, they bind and block voltage-gated calcium channels (Cav). The sequence is that of Omega-conotoxin-like TxO5 from Conus textile (Cloth-of-gold cone).